Reading from the N-terminus, the 105-residue chain is U2-lycotoxin-Ls1b (105 aa).

The signal sequence occupies residues 1-17 (MIKYVLISALLVVAVYS). A propeptide spanning residues 18 to 41 (FTIEDNEDALLEEAEDELDTEEER) is cleaved from the precursor. 4 cysteine pairs are disulfide-bonded: Cys51/Cys67, Cys58/Cys97, Cys60/Cys83, and Cys69/Cys81.

Belongs to the neurotoxin 04 (omega-agtx) family. 01 (type I omega-agtx) subfamily. In terms of tissue distribution, expressed by the venom gland.

It localises to the secreted. In terms of biological role, insecticidal to house crickets. It induces an excitatory slow-onset impact that leads to irreversible spastic paralysis. It also modifies human voltage-gated potassium channel Kv1.5/KCNA5. Most likely, it binds to the voltage-sensing domain of the channel, suggesting it does not block the pore but prevents its opening at physiological membrane potentials. The recombinant peptide binds to the channel in an irreversible manner and slows down the hKv1.5 current activation kinetics. It is not toxic to mice, when intracranially injected (at 0.5 ug/g mouse). In Lycosa singoriensis (Wolf spider), this protein is U2-lycotoxin-Ls1b.